The following is a 194-amino-acid chain: WASH complex subunit 3 (194 aa).

The residue at position 1 (M1) is an N-acetylmethionine. A coiled-coil region spans residues 46-74 (TVCEEKLADLSLRIQQIETTLNILDAKLS). Disordered stretches follow at residues 93-121 (SVTNGAHPEATSEQPQQNSTQDSGLQESE) and 159-194 (EGLDPDLLERPDAPVPDGESEKTVEESSDSESSFSD). A compositionally biased stretch (polar residues) spans 103 to 121 (TSEQPQQNSTQDSGLQESE).

It belongs to the CCDC53 family. Component of the WASH core complex also described as WASH regulatory complex (SHRC) composed of WASH (WASHC1, WASH2P or WASH3P), WASHC2 (WASHC2A or WASHC2C), WASHC3, WASHC4 and WASHC5. The WASH core complex associates via WASHC2 with the F-actin-capping protein dimer (formed by CAPZA1, CAPZA2 or CAPZA3 and CAPZB) in a transient or substoichiometric manner which was initially described as WASH complex.

The protein resides in the early endosome. Acts as a component of the WASH core complex that functions as a nucleation-promoting factor (NPF) at the surface of endosomes, where it recruits and activates the Arp2/3 complex to induce actin polymerization, playing a key role in the fission of tubules that serve as transport intermediates during endosome sorting. The polypeptide is WASH complex subunit 3 (Homo sapiens (Human)).